The chain runs to 441 residues: C-terminal-binding protein 1 (441 aa).

The tract at residues 1 to 70 is interaction with GLIS2 1; the sequence is MGSSHLLNKG…EIHEKVLNEA (70 aa). Residues Ser-100, 180 to 185, Asp-204, 237 to 243, 264 to 266, and Asp-290 contribute to the NAD(+) site; these read IGLGRV, CGLNEHN, and TAR. Residue Arg-266 is part of the active site. The interval 288–360 is interaction with GLIS2 2; it reads ALDVHESEPF…VNKDHLTAAT (73 aa). Glu-295 is a catalytic residue. Ser-300 is modified (phosphoserine). His-315 (proton donor) is an active-site residue. 315–318 contributes to the NAD(+) binding site; it reads HAAW. The interval 409–441 is disordered; the sequence is SHGLPPVAHPPHAPSPGQTVKPEADRDHTSDQL. Ser-423 is subject to Phosphoserine. A Glycyl lysine isopeptide (Lys-Gly) (interchain with G-Cter in SUMO) cross-link involves residue Lys-429. Residues 430-441 are compositionally biased toward basic and acidic residues; that stretch reads PEADRDHTSDQL.

This sequence belongs to the D-isomer specific 2-hydroxyacid dehydrogenase family. As to quaternary structure, homo- or heterodimer. Heterodimer with CTBP2. Interacts with ELK3 (via its PXDLS motif). Interacts with RBBP8 (via its PXDLS motif). Interacts with PNN, MECOM and ZFHX1B. Interacts with ZNF366 (via PXDLS motif). Interaction with SATB1 (non-acetylated form); the interaction stabilizes its attachment to DNA and promotes transcription repression. Interacts with PRDM16; the interaction represses white adipose tissue (WAT)-specific genes expression. Interacts with GLIS2, HIPK2, FOXP1, FOXP2, HDAC4, HDAC5, HDAC9, NRIP1, WIZ and ZNF217. Interacts with BCL6; the interaction is required for BCL6 transcriptional autoinhibition and inhibition of some BCL6 target genes. Interacts with IKZF4. Interacts with MCRIP1 (unphosphorylated form, via the PXDLS motif); competitively inhibiting CTBP-ZEB1 interaction. Interacts with Bassoon/BSN; this interaction targets and anchors CTBP1 to presynapses. Interacts with SIMC1. The cofactor is NAD(+). ADP-ribosylated; when cells are exposed to brefeldin A. In terms of processing, the level of phosphorylation appears to be regulated during the cell cycle. Phosphorylation by HIPK2 on Ser-423 induces proteasomal degradation. Post-translationally, sumoylation on Lys-429 is promoted by the E3 SUMO-protein ligase CBX4. As to expression, expressed in a wide range of adult tissues.

The protein resides in the cytoplasm. The protein localises to the nucleus. Its function is as follows. Corepressor targeting diverse transcription regulators such as GLIS2 or BCL6. Has dehydrogenase activity. Involved in controlling the equilibrium between tubular and stacked structures in the Golgi complex. Functions in brown adipose tissue (BAT) differentiation. This Mus musculus (Mouse) protein is C-terminal-binding protein 1 (Ctbp1).